The following is a 395-amino-acid chain: Argininosuccinate synthase (395 aa).

8–16 serves as a coordination point for ATP; it reads AYSGGLDTS. Positions 86 and 91 each coordinate L-citrulline. Gly-116 contacts ATP. Residues Thr-118, Asn-122, and Asp-123 each coordinate L-aspartate. Asn-122 is an L-citrulline binding site. L-citrulline is bound by residues Arg-126, Ser-172, Ser-181, Glu-257, and Tyr-269.

Belongs to the argininosuccinate synthase family. Type 1 subfamily. In terms of assembly, homotetramer.

Its subcellular location is the cytoplasm. The enzyme catalyses L-citrulline + L-aspartate + ATP = 2-(N(omega)-L-arginino)succinate + AMP + diphosphate + H(+). The protein operates within amino-acid biosynthesis; L-arginine biosynthesis; L-arginine from L-ornithine and carbamoyl phosphate: step 2/3. This is Argininosuccinate synthase from Methanosarcina barkeri (strain Fusaro / DSM 804).